Reading from the N-terminus, the 390-residue chain is Lipid-A-disaccharide synthase (390 aa).

This sequence belongs to the LpxB family.

The catalysed reaction is a lipid X + a UDP-2-N,3-O-bis[(3R)-3-hydroxyacyl]-alpha-D-glucosamine = a lipid A disaccharide + UDP + H(+). The protein operates within bacterial outer membrane biogenesis; LPS lipid A biosynthesis. Its function is as follows. Condensation of UDP-2,3-diacylglucosamine and 2,3-diacylglucosamine-1-phosphate to form lipid A disaccharide, a precursor of lipid A, a phosphorylated glycolipid that anchors the lipopolysaccharide to the outer membrane of the cell. In Haemophilus ducreyi (strain 35000HP / ATCC 700724), this protein is Lipid-A-disaccharide synthase.